The primary structure comprises 304 residues: DnaJ homolog subfamily C member 17 (304 aa).

One can recognise a J domain in the interval 11–76; it reads DLYALLGIEE…AARAAYDKVR (66 aa). Residues 79–106 show a composition bias toward basic and acidic residues; it reads KKQAAERTQKLDEKRKKVKLDLEARERQ. A disordered region spans residues 79–145; sequence KKQAAERTQK…SRQLEEQQRL (67 aa). Ser-112 is subject to Phosphoserine. The segment covering 118–145 has biased composition (basic and acidic residues); it reads SRSTRTLEQEIERLREEGSRQLEEQQRL. The 72-residue stretch at 178–249 folds into the RRM domain; that stretch reads KCKKEDESKG…NPLKISWLEG (72 aa). At Lys-264 the chain carries N6-methyllysine.

The protein localises to the cytoplasm. It is found in the nucleus. Its function is as follows. May negatively affect PAX8-induced thyroglobulin/TG transcription. The protein is DnaJ homolog subfamily C member 17 (DNAJC17) of Homo sapiens (Human).